The sequence spans 108 residues: UPF0145 protein sll118 (108 aa).

It belongs to the UPF0145 family.

This chain is UPF0145 protein sll118, found in Synechocystis sp. (strain ATCC 27184 / PCC 6803 / Kazusa).